The sequence spans 1143 residues: Disease resistance protein Pikm1-TS (1143 aa).

The interval 1-190 is structured coiled coil (CC) domain; that stretch reads MEAAAMAVTA…PLRIMGGEMQ (190 aa). One can recognise an HMA domain in the interval 189–258; the sequence is MQKIVFKIPM…KVGPAMFLEV (70 aa). Residues 191–264 form an HMA-like domain region; the sequence is KIVFKIPMVD…FLEVSQVKED (74 aa). An NB-ARC domain is found at 282-570; the sequence is HEVKTICILG…WIAEGFVSEE (289 aa). LRR repeat units lie at residues 681-706, 708-731, 732-754, 756-777, 778-800, 802-823, 824-848, 945-968, 979-1002, and 1004-1027; these read FKRL…ICEQ, SLRV…MRKL, KHLE…IGEL, HLRI…IREL, QHLH…VGKL, NLKI…IGEL, NHLQ…QISQ, MPNL…INGT, DSRV…EFKF, and AGPA…VFRC.

The protein belongs to the disease resistance NB-LRR family. Interacts with AVR-Pik through its N-terminal part containing the HMA-like domain. In terms of tissue distribution, constitutively expressed.

Disease resistance (R) protein that specifically recognizes the AVR-Pik effector avirulence protein from M.oryzae. Resistance proteins guard the plant against pathogens that contain an appropriate avirulence protein via an indirect interaction with this avirulence protein. That triggers a defense system including the hypersensitive response, which restricts the pathogen growth. Contribution of Pikm-2 is required to recognize the effector avirulence protein AVR-Pik. In Oryza sativa subsp. japonica (Rice), this protein is Disease resistance protein Pikm1-TS.